A 362-amino-acid polypeptide reads, in one-letter code: Probable dual-specificity RNA methyltransferase RlmN (362 aa).

The active-site Proton acceptor is Glu-105. The region spanning 111 to 344 (HEYGNSICVT…VTIRREQGHD (234 aa)) is the Radical SAM core domain. A disulfide bridge connects residues Cys-118 and Cys-349. Residues Cys-125, Cys-129, and Cys-132 each contribute to the [4Fe-4S] cluster site. S-adenosyl-L-methionine-binding positions include 175-176 (GE), Ser-207, 230-232 (SLH), and Asn-306. Cys-349 acts as the S-methylcysteine intermediate in catalysis.

The protein belongs to the radical SAM superfamily. RlmN family. [4Fe-4S] cluster is required as a cofactor.

Its subcellular location is the cytoplasm. The enzyme catalyses adenosine(2503) in 23S rRNA + 2 reduced [2Fe-2S]-[ferredoxin] + 2 S-adenosyl-L-methionine = 2-methyladenosine(2503) in 23S rRNA + 5'-deoxyadenosine + L-methionine + 2 oxidized [2Fe-2S]-[ferredoxin] + S-adenosyl-L-homocysteine. It catalyses the reaction adenosine(37) in tRNA + 2 reduced [2Fe-2S]-[ferredoxin] + 2 S-adenosyl-L-methionine = 2-methyladenosine(37) in tRNA + 5'-deoxyadenosine + L-methionine + 2 oxidized [2Fe-2S]-[ferredoxin] + S-adenosyl-L-homocysteine. Functionally, specifically methylates position 2 of adenine 2503 in 23S rRNA and position 2 of adenine 37 in tRNAs. The chain is Probable dual-specificity RNA methyltransferase RlmN from Bacillus cereus (strain G9842).